Here is a 72-residue protein sequence, read N- to C-terminus: Translation initiation factor IF-1 (72 aa).

The S1-like domain occupies 1–72; sequence MAKEDNIEMQ…SKGRIVFRAR (72 aa).

Belongs to the IF-1 family. Component of the 30S ribosomal translation pre-initiation complex which assembles on the 30S ribosome in the order IF-2 and IF-3, IF-1 and N-formylmethionyl-tRNA(fMet); mRNA recruitment can occur at any time during PIC assembly.

The protein resides in the cytoplasm. Its function is as follows. One of the essential components for the initiation of protein synthesis. Stabilizes the binding of IF-2 and IF-3 on the 30S subunit to which N-formylmethionyl-tRNA(fMet) subsequently binds. Helps modulate mRNA selection, yielding the 30S pre-initiation complex (PIC). Upon addition of the 50S ribosomal subunit IF-1, IF-2 and IF-3 are released leaving the mature 70S translation initiation complex. This is Translation initiation factor IF-1 from Shewanella frigidimarina (strain NCIMB 400).